The sequence spans 132 residues: Phosphoribosyl-AMP cyclohydrolase (132 aa).

Asp-82 provides a ligand contact to Mg(2+). A Zn(2+)-binding site is contributed by Cys-83. The Mg(2+) site is built by Asp-84 and Asp-86. Residues Cys-99 and Cys-106 each contribute to the Zn(2+) site.

It belongs to the PRA-CH family. Homodimer. It depends on Mg(2+) as a cofactor. Zn(2+) is required as a cofactor.

It is found in the cytoplasm. The catalysed reaction is 1-(5-phospho-beta-D-ribosyl)-5'-AMP + H2O = 1-(5-phospho-beta-D-ribosyl)-5-[(5-phospho-beta-D-ribosylamino)methylideneamino]imidazole-4-carboxamide. The protein operates within amino-acid biosynthesis; L-histidine biosynthesis; L-histidine from 5-phospho-alpha-D-ribose 1-diphosphate: step 3/9. Functionally, catalyzes the hydrolysis of the adenine ring of phosphoribosyl-AMP. The polypeptide is Phosphoribosyl-AMP cyclohydrolase (Paramagnetospirillum magneticum (strain ATCC 700264 / AMB-1) (Magnetospirillum magneticum)).